The primary structure comprises 369 residues: Glutamate 5-kinase (369 aa).

K8 is a binding site for ATP. Substrate is bound by residues S49, D136, and N148. Residues 168 to 169 and 212 to 218 contribute to the ATP site; these read TD and TGGMMTK. Residues 277-355 form the PUA domain; that stretch reads TGKLYLDSGA…KEISTILGYV (79 aa).

This sequence belongs to the glutamate 5-kinase family.

The protein resides in the cytoplasm. The catalysed reaction is L-glutamate + ATP = L-glutamyl 5-phosphate + ADP. The protein operates within amino-acid biosynthesis; L-proline biosynthesis; L-glutamate 5-semialdehyde from L-glutamate: step 1/2. Catalyzes the transfer of a phosphate group to glutamate to form L-glutamate 5-phosphate. This chain is Glutamate 5-kinase, found in Trichormus variabilis (strain ATCC 29413 / PCC 7937) (Anabaena variabilis).